The primary structure comprises 236 residues: MQQNTNVDPQEIAKFERMAETWWDLNGEFKPLHLLNPLRLNYIDQTAGGIFGKKVLDVGCGGGILSESMARIGAIVHGLDMGEEPLEVARLHALETGVSINYVKNTAEAHREDHREYYDVVTCMEMLEHVPDPLSVIQACCDMVKPGGFVFFSTINRNIKSFVETIIGAEYLLKMLPIGTHDHNKFIKPSELMALVDNTDLLCKDALGITYNPLTGIFKYTPKVDVNYMIATQKVD.

Positions 39, 59, 80, and 124 each coordinate S-adenosyl-L-methionine.

Belongs to the methyltransferase superfamily. UbiG/COQ3 family.

It carries out the reaction a 3-demethylubiquinol + S-adenosyl-L-methionine = a ubiquinol + S-adenosyl-L-homocysteine + H(+). The enzyme catalyses a 3-(all-trans-polyprenyl)benzene-1,2-diol + S-adenosyl-L-methionine = a 2-methoxy-6-(all-trans-polyprenyl)phenol + S-adenosyl-L-homocysteine + H(+). Its pathway is cofactor biosynthesis; ubiquinone biosynthesis. O-methyltransferase that catalyzes the 2 O-methylation steps in the ubiquinone biosynthetic pathway. This chain is Ubiquinone biosynthesis O-methyltransferase, found in Shewanella sp. (strain MR-7).